The following is a 368-amino-acid chain: Cytochrome b (368 aa).

4 consecutive transmembrane segments (helical) span residues F33 to M53, W77 to G99, T112 to V132, and F178 to I198. Heme b is bound by residues H83 and H97. Heme b contacts are provided by H182 and H196. Residue H201 participates in a ubiquinone binding. 4 helical membrane-spanning segments follow: residues F224 to L244, L288 to N308, I323 to V343, and S345 to M365.

This sequence belongs to the cytochrome b family. In terms of assembly, the main subunits of complex b-c1 are: cytochrome b, cytochrome c1 and the Rieske protein. The cofactor is heme b.

The protein localises to the mitochondrion inner membrane. In terms of biological role, component of the ubiquinol-cytochrome c reductase complex (complex III or cytochrome b-c1 complex) that is part of the mitochondrial respiratory chain. The b-c1 complex mediates electron transfer from ubiquinol to cytochrome c. Contributes to the generation of a proton gradient across the mitochondrial membrane that is then used for ATP synthesis. The sequence is that of Cytochrome b (mt:Cyt-b) from Bugula neritina (Brown bryozoan).